The primary structure comprises 93 residues: Co-chaperonin GroES 2 (93 aa).

The segment at 1–20 is disordered; sequence MQPLGERIVVQREESETTTA.

The protein belongs to the GroES chaperonin family. In terms of assembly, heptamer of 7 subunits arranged in a ring. Interacts with the chaperonin GroEL.

It localises to the cytoplasm. Functionally, together with the chaperonin GroEL, plays an essential role in assisting protein folding. The GroEL-GroES system forms a nano-cage that allows encapsulation of the non-native substrate proteins and provides a physical environment optimized to promote and accelerate protein folding. GroES binds to the apical surface of the GroEL ring, thereby capping the opening of the GroEL channel. The protein is Co-chaperonin GroES 2 of Rhodopirellula baltica (strain DSM 10527 / NCIMB 13988 / SH1).